We begin with the raw amino-acid sequence, 82 residues long: U17-hexatoxin-Hi1a (82 aa).

An N-terminal signal peptide occupies residues 1–21 (MKTIFAVTLLLFAIYVPECMP). 5 disulfides stabilise this stretch: Cys22/Cys33, Cys27/Cys48, Cys32/Cys61, Cys58/Cys69, and Cys63/Cys75.

In terms of tissue distribution, expressed by the venom gland.

The protein resides in the secreted. Its function is as follows. Probable ion channel inhibitor. This is U17-hexatoxin-Hi1a from Hadronyche infensa (Fraser island funnel-web spider).